A 776-amino-acid polypeptide reads, in one-letter code: Homoaconitase, mitochondrial (776 aa).

The transit peptide at 1–24 (MVALRRAVALNAVAIARLQTRALT) directs the protein to the mitochondrion. The [4Fe-4S] cluster site is built by Cys392, Cys459, and Cys462.

It belongs to the aconitase/IPM isomerase family. The cofactor is [4Fe-4S] cluster.

It localises to the mitochondrion. It catalyses the reaction (2R,3S)-homoisocitrate = cis-homoaconitate + H2O. It functions in the pathway amino-acid biosynthesis; L-lysine biosynthesis via AAA pathway; L-alpha-aminoadipate from 2-oxoglutarate: step 3/5. Catalyzes the reversible hydration of cis-homoaconitate to (2R,3S)-homoisocitrate, a step in the alpha-aminoadipate pathway for lysine biosynthesis. The protein is Homoaconitase, mitochondrial (LYS4) of Gibberella zeae (strain ATCC MYA-4620 / CBS 123657 / FGSC 9075 / NRRL 31084 / PH-1) (Wheat head blight fungus).